The following is a 926-amino-acid chain: Alpha-aminoadipic semialdehyde synthase, mitochondrial (926 aa).

The N-terminal 27 residues, 1–27, are a transit peptide targeting the mitochondrion; the sequence is MLRAQRPRLARLRACLSRGLHHKPVMA. The interval 28–455 is lysine-ketoglutarate reductase; sequence LRREDVNAWE…DAVITSNGLL (428 aa). Residues K48, K52, and K56 each carry the N6-acetyllysine modification. Position 93 is an N6-acetyllysine; alternate (K93). Position 93 is an N6-succinyllysine; alternate (K93). Position 128 is an N6-acetyllysine (K128). K138 bears the N6-acetyllysine; alternate mark. K138 carries the post-translational modification N6-succinyllysine; alternate. K274 bears the N6-succinyllysine mark. K286 is modified (N6-acetyllysine; alternate). K286 is modified (N6-succinyllysine; alternate). K333 is modified (N6-succinyllysine). K458 is subject to N6-acetyllysine; alternate. K458 is modified (N6-succinyllysine; alternate). The tract at residues 477–926 is saccharopine dehydrogenase; it reads MSTKKKVLVL…VFNTQSTIKL (450 aa). 3 residues coordinate NAD(+): S488, D512, and Q516. N6-acetyllysine; alternate is present on residues K523 and K535. N6-succinyllysine; alternate is present on residues K523 and K535. Residues L554, A576, and S577 each coordinate NAD(+). 577–578 serves as a coordination point for L-saccharopine; sequence SY. Position 584 is an N6-acetyllysine; alternate (K584). The residue at position 584 (K584) is an N6-succinyllysine; alternate. NAD(+) contacts are provided by L603, D604, and P605. D604 contributes to the L-saccharopine binding site. Position 703 (R703) interacts with L-saccharopine. At K707 the chain carries N6-acetyllysine. 724 to 726 provides a ligand contact to L-saccharopine; the sequence is TLR. K732 bears the N6-succinyllysine mark. Position 739 is an N6-acetyllysine (K739). Position 761 is an N6-acetyllysine; alternate (K761). An N6-succinyllysine; alternate modification is found at K761. An N6-acetyllysine mark is found at K778 and K780.

This sequence in the N-terminal section; belongs to the AlaDH/PNT family. In the C-terminal section; belongs to the saccharopine dehydrogenase family. In terms of assembly, homotetramer. In terms of tissue distribution, highly expressed in kidney and liver, very low expression is seen in heart, brain, spleen, lung, skeletal muscle and testis.

It localises to the mitochondrion. The enzyme catalyses L-saccharopine + NADP(+) + H2O = L-lysine + 2-oxoglutarate + NADPH + H(+). It carries out the reaction L-saccharopine + NAD(+) + H2O = (S)-2-amino-6-oxohexanoate + L-glutamate + NADH + H(+). It participates in amino-acid degradation; L-lysine degradation via saccharopine pathway; glutaryl-CoA from L-lysine: step 1/6. It functions in the pathway amino-acid degradation; L-lysine degradation via saccharopine pathway; glutaryl-CoA from L-lysine: step 2/6. Functionally, bifunctional enzyme that catalyzes the first two steps in lysine degradation. This chain is Alpha-aminoadipic semialdehyde synthase, mitochondrial, found in Mus musculus (Mouse).